We begin with the raw amino-acid sequence, 439 residues long: Enolase 2 (439 aa).

Substrate contacts are provided by H160 and E169. Residue E212 is the Proton donor of the active site. Mg(2+) is bound by residues D247, E296, and D323. The substrate site is built by E296 and D323. K348 serves as the catalytic Proton acceptor. Substrate contacts are provided by residues 375–378 (SHRS) and K399.

It belongs to the enolase family. In terms of assembly, homodimer. Mg(2+) serves as cofactor.

The protein localises to the cytoplasm. It catalyses the reaction (2R)-2-phosphoglycerate = phosphoenolpyruvate + H2O. The protein operates within carbohydrate degradation; glycolysis; pyruvate from D-glyceraldehyde 3-phosphate: step 4/5. This chain is Enolase 2 (ENO2), found in Debaryomyces hansenii (strain ATCC 36239 / CBS 767 / BCRC 21394 / JCM 1990 / NBRC 0083 / IGC 2968) (Yeast).